The sequence spans 469 residues: uncharacterized protein (469 aa).

The HTH gntR-type domain occupies T13–V81. Positions K41–E60 form a DNA-binding region, H-T-H motif. K309 carries the N6-(pyridoxal phosphate)lysine modification.

It in the C-terminal section; belongs to the class-I pyridoxal-phosphate-dependent aminotransferase family. Requires pyridoxal 5'-phosphate as cofactor.

This is an uncharacterized protein from Bacillus subtilis (strain 168).